A 350-amino-acid polypeptide reads, in one-letter code: Nicotinate-nucleotide--dimethylbenzimidazole phosphoribosyltransferase (350 aa).

Glu317 functions as the Proton acceptor in the catalytic mechanism.

This sequence belongs to the CobT family.

It carries out the reaction 5,6-dimethylbenzimidazole + nicotinate beta-D-ribonucleotide = alpha-ribazole 5'-phosphate + nicotinate + H(+). The protein operates within nucleoside biosynthesis; alpha-ribazole biosynthesis; alpha-ribazole from 5,6-dimethylbenzimidazole: step 1/2. Its function is as follows. Catalyzes the synthesis of alpha-ribazole-5'-phosphate from nicotinate mononucleotide (NAMN) and 5,6-dimethylbenzimidazole (DMB). In Shewanella oneidensis (strain ATCC 700550 / JCM 31522 / CIP 106686 / LMG 19005 / NCIMB 14063 / MR-1), this protein is Nicotinate-nucleotide--dimethylbenzimidazole phosphoribosyltransferase.